A 330-amino-acid polypeptide reads, in one-letter code: MELLSTPHSIEINNITCDSFRISWAMEDSDLERVTHYFIDLNKKENKNSNKFKHRDVPTKLVAKAVPLPMTVRGHWFLSPRTEYSVAVQTAVKQSDGEYLVSGWSETVEFCTGDYAKEHLAQLQEKAEQIAGRMLRFSVFYRNHHKEYFQHARTHCGNMLQPYLKDNSGSHGSPTSGMLHGVFFSCNTEFNTGQPPQDSPYGRWRFQIPAQRLFNPSTNLYFADFYCMYTAYHYAILVLAPKGSLGDRFCRDRLPLLDIACNKFLTCSVEDGELVFRHAQDLILEIIYTEPVDLSLGTLGEISGHQLMSLSTADAKKDPSCKTCNISVGR.

Residues 6-115 enclose the Fibronectin type-III domain; it reads TPHSIEINNI…ETVEFCTGDY (110 aa). Asn14 and Asn325 each carry an N-linked (GlcNAc...) asparagine glycan.

Belongs to the PHYHIP family. Interacts with PHYH and ADGRB1. As to expression, highly expressed in the brain.

In terms of biological role, its interaction with PHYH suggests a role in the development of the central system. The protein is Phytanoyl-CoA hydroxylase-interacting protein (PHYHIP) of Homo sapiens (Human).